The sequence spans 37 residues: Large ribosomal subunit protein bL36 (37 aa).

It belongs to the bacterial ribosomal protein bL36 family.

The sequence is that of Large ribosomal subunit protein bL36 from Marinomonas sp. (strain MWYL1).